Reading from the N-terminus, the 668-residue chain is Probable syringafactin export ATP-binding/permease protein SyfD (668 aa).

One can recognise an ABC transporter domain in the interval 22–260 (LRLQQVSRSF…APEAQPATPP (239 aa)). 58–65 (GASGSGKS) contacts ATP. Residues 242-263 (RRTAQTTQPAPEAQPATPPGPA) are disordered. Positions 245–256 (AQTTQPAPEAQP) are enriched in low complexity. 5 helical membrane-spanning segments follow: residues 267 to 287 (LLAS…ALIS), 293 to 313 (LLTM…SAIG), 541 to 561 (LTLL…IGVM), 602 to 622 (MGGV…TLFV), and 631 to 651 (LASV…FGFV).

The protein belongs to the ABC transporter superfamily. Macrolide exporter (TC 3.A.1.122) family. Probably part of a tripartite efflux system, which is composed of an inner membrane transporter, a periplasmic membrane fusion protein, and an outer membrane component.

The protein resides in the cell inner membrane. In terms of biological role, probably involved in the export of syringafactins. This Pseudomonas syringae pv. tomato (strain ATCC BAA-871 / DC3000) protein is Probable syringafactin export ATP-binding/permease protein SyfD.